Consider the following 275-residue polypeptide: MRLVILDDYALASEWAAKYICNRIIQFSPGPDKYFTLGLPTGSTPLGCYKKLIEYHKSGDLSFKYVKTFNMDEYVGLPRDHPESYHSYMWNNFFKHIDIDPSNAHILDGNASDLQAECEDFERKIKEAGGIELFVGGIGPDGHIAFNEPGSSLVSRTRLKTLAMDTILANAKYFDGDLSKVPTMALTVGVGTVMDAREVMILITGAHKAFALYKAIEEGVNHMWTVSAFQQHPRTIFVCDEDATLELRVKTVKYFKGLMHVHNRLVDPLHSMKKN.

Asp72 functions as the Proton acceptor; for enolization step in the catalytic mechanism. Residues 103 to 131 adopt a coiled-coil conformation; sequence NAHILDGNASDLQAECEDFERKIKEAGGI. Asp141 serves as the catalytic For ring-opening step. The active-site Proton acceptor; for ring-opening step is the His143. Glu148 functions as the For ring-opening step in the catalytic mechanism.

The protein belongs to the glucosamine/galactosamine-6-phosphate isomerase family. As to quaternary structure, homohexamer.

The protein localises to the cytoplasm. The enzyme catalyses alpha-D-glucosamine 6-phosphate + H2O = beta-D-fructose 6-phosphate + NH4(+). Functionally, catalyzes the reversible conversion of alpha-D-glucosamine 6-phosphate (GlcN-6P) into beta-D-fructose 6-phosphate (Fru-6P) and ammonium ion, a regulatory reaction step in de novo uridine diphosphate-N-acetyl-alpha-D-glucosamine (UDP-GlcNAc) biosynthesis via hexosamine pathway. In Xenopus tropicalis (Western clawed frog), this protein is Glucosamine-6-phosphate deaminase 2.